The chain runs to 2211 residues: Nonribosomal peptide synthetase 13 (2211 aa).

The adenylation 1 stretch occupies residues 76–475; it reads TYAELDSLSD…IEHHLQLTLP (400 aa). In terms of domain architecture, Carrier 1 spans 594–671; sequence PPSTPKEATI…EQSKRAGLIQ (78 aa). Ser-631 is subject to O-(pantetheine 4'-phosphoryl)serine. Residues 710–975 are condensation 1; that stretch reads EDIYPCTALQ…IATVPTRIRV (266 aa). An adenylation 2 region spans residues 1169–1563; sequence TYRELWAHSS…LGAVEASVMR (395 aa). One can recognise a Carrier 2 domain in the interval 1677-1756; sequence PMSDDNERRL…RSRHLITEQA (80 aa). Position 1714 is an O-(pantetheine 4'-phosphoryl)serine (Ser-1714). Positions 1814 to 2069 are condensation 2; that stretch reads HFQFDLSGAV…CTNYIPYRLS (256 aa).

It belongs to the NRP synthetase family.

It carries out the reaction L-proline + L-tryptophan + 2 ATP = brevianamide F + 2 AMP + 2 diphosphate + 2 H(+). Its pathway is mycotoxin biosynthesis. Nonribosomal peptide synthetase; part of the gene cluster that mediates the biosynthesis of fumitremorgins, indole alkaloids that carry not only intriguing chemical structures, but also interesting biological and pharmacological activities. The biosynthesis of fumitremorgin-type alkaloids begins by condensation of the two amino acids L-tryptophan and L-proline to brevianamide F, catalyzed by the non-ribosomal peptide synthetase ftmA. Brevianamide F is then prenylated by the prenyltransferase ftmPT1/ftmB in the presence of dimethylallyl diphosphate, resulting in the formation of tryprostatin B. The three cytochrome P450 monooxygenases, ftmP450-1/ftmC, ftmP450-2/ftmE and ftmP450-3/FtmG, are responsible for the conversion of tryprostatin B to 6-hydroxytryprostatin B, tryprostatin A to fumitremorgin C and fumitremorgin C to 12,13-dihydroxyfumitremorgin C, respectively. The putative methyltransferase ftmMT/ftmD is expected for the conversion of 6-hydroxytryprostatin B to tryprostatin A. FtmPT2/FtmH catalyzes the prenylation of 12,13-dihydroxyfumitre-morgin C in the presence of dimethylallyl diphosphate, resulting in the formation of fumitremorgin B. Fumitremorgin B is further converted to verruculogen by ftmOx1/ftmF via the insertion of an endoperoxide bond between the two prenyl moieties. In some fungal species, verruculogen is further converted to fumitremorgin A, but the enzymes involved in this step have not been identified yet. The chain is Nonribosomal peptide synthetase 13 from Aspergillus fumigatus (strain ATCC MYA-4609 / CBS 101355 / FGSC A1100 / Af293) (Neosartorya fumigata).